The primary structure comprises 132 residues: Transcriptional regulator MraZ (132 aa).

2 SpoVT-AbrB domains span residues 5-47 (TYEH…SKDD) and 76-119 (TVEI…SKNK).

Belongs to the MraZ family. In terms of assembly, forms oligomers.

It is found in the cytoplasm. The protein resides in the nucleoid. This is Transcriptional regulator MraZ from Mycoplasma capricolum subsp. capricolum (strain California kid / ATCC 27343 / NCTC 10154).